The primary structure comprises 181 residues: Adenine phosphoribosyltransferase 2 (181 aa).

Residue Ser-2 is modified to N-acetylserine.

It belongs to the purine/pyrimidine phosphoribosyltransferase family.

Its subcellular location is the cytoplasm. It catalyses the reaction AMP + diphosphate = 5-phospho-alpha-D-ribose 1-diphosphate + adenine. It participates in purine metabolism; AMP biosynthesis via salvage pathway; AMP from adenine: step 1/1. Functionally, catalyzes a salvage reaction resulting in the formation of AMP, that is energically less costly than de novo synthesis. May lack catalytic activity. The polypeptide is Adenine phosphoribosyltransferase 2 (APT2) (Saccharomyces cerevisiae (strain ATCC 204508 / S288c) (Baker's yeast)).